The primary structure comprises 106 residues: UPF0060 membrane protein Smed_0659 (106 aa).

3 helical membrane passes run 4–24 (FAIY…FWAW), 31–51 (GLWL…LTMV), and 61–81 (AAYG…AEGA).

Belongs to the UPF0060 family.

It localises to the cell inner membrane. In Sinorhizobium medicae (strain WSM419) (Ensifer medicae), this protein is UPF0060 membrane protein Smed_0659.